A 343-amino-acid chain; its full sequence is Probable siderophore transport system permease protein YfhA (343 aa).

A run of 9 helical transmembrane segments spans residues 15–35 (WIVFLVLLGLTAAVLIISAGL), 69–89 (ILTALCAGVCLAAAGAILQGL), 97–117 (PDIIGITGGAAVAVVLLMMFF), 130–150 (WLPAAAFIGASAVGLIVYLLA), 160–180 (LVLIGIGFSMSAQAMTTLLMI), 204–224 (QHVKIAIILSVILLFICFVAL), 249–269 (FFLLLLSTALTGCAVSVAGTI), 289–309 (GALLPASALIGALLVLTADIV), and 317–337 (VEVPAGVFTAAIGAPYFIYLL).

The protein belongs to the binding-protein-dependent transport system permease family. FecCD subfamily. In terms of assembly, the complex is composed of one ATP-binding protein (YusV), two transmembrane proteins (YfiZ and YfhA) and a solute-binding protein (YfiY).

It localises to the cell membrane. Functionally, part of the ABC transporter complex YfiYZ/YfhA/YusV involved in import of the iron-hydroxamate siderophores schizokinen, arthrobactin and corprogen. The chain is Probable siderophore transport system permease protein YfhA (yfhA) from Bacillus subtilis (strain 168).